We begin with the raw amino-acid sequence, 340 residues long: Ornithine carbamoyltransferase (340 aa).

Residues 57 to 60 (STRT), Gln-84, Arg-108, and 135 to 138 (HPTQ) contribute to the carbamoyl phosphate site. Residues Asn-167, Asp-231, and 235 to 236 (SM) each bind L-ornithine. Residues 272–273 (CL) and Arg-317 each bind carbamoyl phosphate.

It belongs to the aspartate/ornithine carbamoyltransferase superfamily. OTCase family.

It localises to the cytoplasm. The enzyme catalyses carbamoyl phosphate + L-ornithine = L-citrulline + phosphate + H(+). Its pathway is amino-acid biosynthesis; L-arginine biosynthesis; L-arginine from L-ornithine and carbamoyl phosphate: step 1/3. Its function is as follows. Reversibly catalyzes the transfer of the carbamoyl group from carbamoyl phosphate (CP) to the N(epsilon) atom of ornithine (ORN) to produce L-citrulline. This Lactiplantibacillus plantarum (strain ATCC BAA-793 / NCIMB 8826 / WCFS1) (Lactobacillus plantarum) protein is Ornithine carbamoyltransferase (argF).